The sequence spans 120 residues: ATP-dependent Clp protease adapter protein ClpS (120 aa).

This sequence belongs to the ClpS family. Binds to the N-terminal domain of the chaperone ClpA.

Involved in the modulation of the specificity of the ClpAP-mediated ATP-dependent protein degradation. In Azotobacter vinelandii (strain DJ / ATCC BAA-1303), this protein is ATP-dependent Clp protease adapter protein ClpS.